A 203-amino-acid chain; its full sequence is Imidazoleglycerol-phosphate dehydratase (203 aa).

Belongs to the imidazoleglycerol-phosphate dehydratase family.

The protein resides in the cytoplasm. It carries out the reaction D-erythro-1-(imidazol-4-yl)glycerol 3-phosphate = 3-(imidazol-4-yl)-2-oxopropyl phosphate + H2O. Its pathway is amino-acid biosynthesis; L-histidine biosynthesis; L-histidine from 5-phospho-alpha-D-ribose 1-diphosphate: step 6/9. This Deinococcus geothermalis (strain DSM 11300 / CIP 105573 / AG-3a) protein is Imidazoleglycerol-phosphate dehydratase.